The sequence spans 236 residues: MDGAYGHVHNGSPMAVDGEESGAGTGTGAGADGLYPTSTDTAAHAVSLPRSVGDFAAVVRAVSAEAADALRSGAGPPAEAWPRVYRMFCDMFGRYAASPMPVFHSADPLRRAVGLYLVDLGAAPVETHAELSGRMLFCAYWCCLGHAFACSRPQMYERACARFFETRLGIGETPPADAERYWAALLNMAGAEPELFPRHAAAAAYLRARGRKLPLQLPSAHRTAKTVAVTGQSINF.

Residues 1–32 (MDGAYGHVHNGSPMAVDGEESGAGTGTGAGAD) are disordered. Positions 21 to 31 (SGAGTGTGAGA) are enriched in gly residues. Residues 138–150 (CAYWCCLGHAFAC) fold into a zinc finger.

Belongs to the herpesviridae US10 family. In terms of processing, phosphorylated.

It localises to the virion tegument. Its subcellular location is the host nucleus matrix. The protein is Virion protein US10 homolog (IR5) of Equine herpesvirus 1 (strain Kentucky A) (EHV-1).